The chain runs to 175 residues: Shikimate kinase (175 aa).

11–16 (GAGKTT) contributes to the ATP binding site. Mg(2+) is bound at residue threonine 15. Substrate is bound by residues aspartate 33, arginine 57, and glycine 79. Arginine 118 is an ATP binding site. A substrate-binding site is contributed by arginine 140.

The protein belongs to the shikimate kinase family. Monomer. The cofactor is Mg(2+).

The protein resides in the cytoplasm. It carries out the reaction shikimate + ATP = 3-phosphoshikimate + ADP + H(+). It functions in the pathway metabolic intermediate biosynthesis; chorismate biosynthesis; chorismate from D-erythrose 4-phosphate and phosphoenolpyruvate: step 5/7. Functionally, catalyzes the specific phosphorylation of the 3-hydroxyl group of shikimic acid using ATP as a cosubstrate. The chain is Shikimate kinase from Phocaeicola vulgatus (strain ATCC 8482 / DSM 1447 / JCM 5826 / CCUG 4940 / NBRC 14291 / NCTC 11154) (Bacteroides vulgatus).